A 511-amino-acid polypeptide reads, in one-letter code: Cytochrome P450 77A2 (511 aa).

C456 is a heme binding site.

This sequence belongs to the cytochrome P450 family. It depends on heme as a cofactor.

This chain is Cytochrome P450 77A2 (CYP77A2), found in Solanum melongena (Eggplant).